The chain runs to 574 residues: Membrane protein insertase YidC (574 aa).

6 helical membrane passes run 6 to 26, 350 to 370, 376 to 396, 447 to 467, 491 to 511, and 525 to 545; these read VFLI…WGKE, VIDY…FWVL, FLHN…LVLY, GGCL…WVLV, FILP…TPTP, and PLVF…YWVV.

The protein belongs to the OXA1/ALB3/YidC family. Type 1 subfamily. Interacts with the Sec translocase complex via SecD. Specifically interacts with transmembrane segments of nascent integral membrane proteins during membrane integration.

Its subcellular location is the cell inner membrane. In terms of biological role, required for the insertion and/or proper folding and/or complex formation of integral membrane proteins into the membrane. Involved in integration of membrane proteins that insert both dependently and independently of the Sec translocase complex, as well as at least some lipoproteins. Aids folding of multispanning membrane proteins. This chain is Membrane protein insertase YidC, found in Xanthomonas oryzae pv. oryzae (strain KACC10331 / KXO85).